A 560-amino-acid polypeptide reads, in one-letter code: MDIKRTILIAALAVVSYVMVLKWNDDYGQAALPTQNTAASTVAPGLPDGVPAGNNGASADVPSANAESSPAELAPVALSKDLIRVKTDVLELAIDPVGGDIVQLNLPKYPRRQDHPNIPFQLFDNGGERVYLAQSGLTGTDGPDARASGRPLYAAEQKSYQLADGQEQLVVDLKFSDNGVNYIKRFSFKRGEYDLNVSYLIDNQSGQAWNGNMFAQLKRDASGDPSSSTATGTATYLGAALWTASEPYKKVSMKDIDKGSLKENVSGGWVAWLQHYFVTAWIPAKSDNNVVQTRKDSQGNYIIGYTGPVISVPAGGKVETSALLYAGPKIQSKLKELSPGLELTVDYGFLWFIAQPIFWLLQHIHSLLGNWGWSIIVLTMLIKGLFFPLSAASYRSMARMRAVAPKLAALKERFGDDRQKMSQAMMELYKKEKINPLGGCLPILVQMPVFLALYWVLLESVEMRQAPWILWITDLSIKDPFFILPIIMGATMFIQQRLNPTPPDPMQAKVMKMMPIIFTFFFLWFPAGLVLYWVVNNCLSISQQWYITRRIEAATKKAAA.

The chain crosses the membrane as a helical span at residues 1 to 21; sequence MDIKRTILIAALAVVSYVMVL. The interval 42 to 66 is disordered; the sequence is VAPGLPDGVPAGNNGASADVPSANA. The next 5 helical transmembrane spans lie at 341–361, 367–387, 437–457, 468–488, and 515–535; these read LELTVDYGFLWFIAQPIFWLL, LLGNWGWSIIVLTMLIKGLFF, LGGCLPILVQMPVFLALYWVL, WILWITDLSIKDPFFILPIIM, and PIIFTFFFLWFPAGLVLYWVV.

Belongs to the OXA1/ALB3/YidC family. Type 1 subfamily. Interacts with the Sec translocase complex via SecD. Specifically interacts with transmembrane segments of nascent integral membrane proteins during membrane integration.

It localises to the cell inner membrane. Its function is as follows. Required for the insertion and/or proper folding and/or complex formation of integral membrane proteins into the membrane. Involved in integration of membrane proteins that insert both dependently and independently of the Sec translocase complex, as well as at least some lipoproteins. Aids folding of multispanning membrane proteins. In Pseudomonas putida (strain ATCC 47054 / DSM 6125 / CFBP 8728 / NCIMB 11950 / KT2440), this protein is Membrane protein insertase YidC.